We begin with the raw amino-acid sequence, 70 residues long: Small ribosomal subunit protein bS21 (70 aa).

It belongs to the bacterial ribosomal protein bS21 family.

The chain is Small ribosomal subunit protein bS21 from Neisseria gonorrhoeae (strain ATCC 700825 / FA 1090).